A 953-amino-acid polypeptide reads, in one-letter code: MNIRKPLCSNSVVGACTLVSLTTAVILGHLMLRELMLLPQDLHESSSGLWKTYRPHHQESYEPAPLHIQEHAEQLRAVPTQCDVTPNSRFDCAPDKGITQEQCEARGCCWVPAGQVLNGPVMGQPWCFFPPSYPSYRLENLSSTESGYTATLTRTSPTFFPKDVLTLQLEVLMETDSRLHFMIKDPTSKRYEVPLETPRVLSQAPSPLYSVEFSEEPFGVIVRRKLGGRVLLNTTVAPLFFADQFLQLSTSLPSQHIAGLGEHLSPLMLSTEWTRITLWNRDVAPSQGVNLYGSHPFYLALEDGGLAHGVFLLNSNAMDVVLQPSPALTWRSTGGILDVYVFLGPEPKSVVQQYLDVVGYPFMPPYWGLGFHLCRWGYSSTAIVRQVVENMTRTHFPLDVQWNDLDYMDARRDFTFNQDGFADFPDMVHELHQGGRRYMMIVDPAISSSGPAGSYRPYDEGLRRGVFITNETGQPLIGKVWPGSTAFPDFTNPETLDWWQDMVSEFHAQVPFDGMWIDMNEPSNFIRGSQQGCPDNELENPPYVPGVVGGALQAATICASSHQFLSTHYNLHNLYGLTEAIASSRALVKTRGTRPFVISRSTFAGHGRYAGHWTGDVWSSWEHLAYSVPEILQFNLLGVPLVGADICGFQGNTTEELCVRWTQLGAFYPFMRNHNDLNSLPQEPYRFSETAQQAMRKAFTLRYALLPYLYTLFHGAHVKGDTVARPLFLEFPEDPSTWSVDRQLLWGPALLITPVLEPGKTDVTGYFPKGMWYNLQMVPVETLGSLPSSSPASSFRSIVHSKGQWLTLEAPLDTINVHLRAGYIIPLQGPSLTTTESRKQPMALAVALTESGEASGELFWDDGESLGVLERGAYTLVTFSAKNNTIVNKLVHVTKEGGELQLREVTILGVTTAPTQVLSNGISVSNFTYSPDDKSLSIPVSLLMGERFQIDWS.

An N-terminal signal peptide occupies residues 1–27; it reads MNIRKPLCSNSVVGACTLVSLTTAVIL. A propeptide spanning residues 28-69 is cleaved from the precursor; sequence GHLMLRELMLLPQDLHESSSGLWKTYRPHHQESYEPAPLHIQ. The P-type domain maps to 80-131; sequence TQCDVTPNSRFDCAPDKGITQEQCEARGCCWVPAGQVLNGPVMGQPWCFFPP. Intrachain disulfides connect C82–C109, C92–C108, and C103–C127. N-linked (GlcNAc...) asparagine glycans are attached at residues N140, N233, and N390. D404 contributes to the substrate binding site. An N-linked (GlcNAc...) asparagine glycan is attached at N470. The active-site Nucleophile is the D518. E521 is a catalytic residue. A disulfide bridge connects residues C533 and C558. Substrate is bound by residues R600 and D616. C647 and C658 are joined by a disulfide. The N-linked (GlcNAc...) asparagine glycan is linked to N652. H674 contacts substrate. N-linked (GlcNAc...) asparagine glycosylation is found at N883 and N926.

This sequence belongs to the glycosyl hydrolase 31 family.

It is found in the lysosome. It localises to the lysosome membrane. The enzyme catalyses Hydrolysis of terminal, non-reducing (1-&gt;4)-linked alpha-D-glucose residues with release of alpha-D-glucose.. In terms of biological role, essential for the degradation of glycogen in lysosomes. Has highest activity on alpha-1,4-linked glycosidic linkages, but can also hydrolyze alpha-1,6-linked glucans. The polypeptide is Lysosomal alpha-glucosidase (Gaa) (Rattus norvegicus (Rat)).